Here is a 163-residue protein sequence, read N- to C-terminus: Photosystem II extrinsic protein V (163 aa).

The signal sequence occupies residues 1–26; that stretch reads MLKRSSWLAALLGLLTVVSTSTHTYA. Residues Cys63, Cys66, His67, and His118 each contribute to the heme c site.

Belongs to the cytochrome c family. PsbV subfamily. As to quaternary structure, PSII is composed of 1 copy each of membrane proteins PsbA, PsbB, PsbC, PsbD, PsbE, PsbF, PsbH, PsbI, PsbJ, PsbK, PsbL, PsbM, PsbT, PsbY, PsbZ, Psb30/Ycf12, at least 3 peripheral proteins of the oxygen-evolving complex and a large number of cofactors. It forms dimeric complexes. The extrinsic subunits in red algae are PsbO (OEC33), PsbQ', cytochrome c-550 and PsbU. The cofactor is heme c.

It is found in the plastid. The protein localises to the chloroplast thylakoid membrane. Its function is as follows. One of the extrinsic, lumenal subunits of photosystem II (PSII). PSII is a light-driven water plastoquinone oxidoreductase, using light energy to abstract electrons from H(2)O, generating a proton gradient subsequently used for ATP formation. The extrinsic proteins stabilize the structure of photosystem II oxygen-evolving complex (OEC), the ion environment of oxygen evolution and protect the OEC against heat-induced inactivation. This Pyropia yezoensis (Susabi-nori) protein is Photosystem II extrinsic protein V.